The sequence spans 57 residues: uncharacterized protein (57 aa).

An N-terminal signal peptide occupies residues 1–20; that stretch reads MKKLALILFMGTLVSFYADA.

This is an uncharacterized protein from Escherichia coli (strain K12).